A 322-amino-acid chain; its full sequence is GDSL esterase/lipase At2g04020 (322 aa).

Residues 1–26 (MGLPSSLESYLLLILLSFLNVSTIYS) form the signal peptide. Ser-50 (nucleophile) is an active-site residue. N-linked (GlcNAc...) asparagine glycosylation is present at Asn-260. Residues Asp-296 and His-299 contribute to the active site.

This sequence belongs to the 'GDSL' lipolytic enzyme family.

It localises to the secreted. The protein is GDSL esterase/lipase At2g04020 of Arabidopsis thaliana (Mouse-ear cress).